Reading from the N-terminus, the 67-residue chain is Large ribosomal subunit protein bL35 (67 aa).

Belongs to the bacterial ribosomal protein bL35 family.

The protein is Large ribosomal subunit protein bL35 of Methylorubrum populi (strain ATCC BAA-705 / NCIMB 13946 / BJ001) (Methylobacterium populi).